The sequence spans 1064 residues: Fibropellin-1 (1064 aa).

The first 19 residues, 1 to 19, serve as a signal peptide directing secretion; that stretch reads MRTWLLAVLLLSVIAVTYG. The EGF-like 1 domain occupies 20-55; the sequence is QGECDSDPCENGSTCQEGEGSYICQCPMGYDGQNCD. 4 disulfides stabilise this stretch: Cys-23/Cys-34, Cys-28/Cys-43, Cys-45/Cys-54, and Cys-62/Cys-88. Residue Asn-30 is glycosylated (N-linked (GlcNAc...) asparagine). The CUB domain occupies 62 to 175; sequence CGYNVFDANG…NRGFRITFSS (114 aa). Residue Asn-136 is glycosylated (N-linked (GlcNAc...) asparagine). The EGF-like 2; calcium-binding domain maps to 176–212; sequence DGDDCDPNLCQNGAACTDLVNDYACTCPPGFTGRNCE. Intrachain disulfides connect Cys-180–Cys-191, Cys-185–Cys-200, Cys-202–Cys-211, Cys-218–Cys-229, Cys-223–Cys-238, Cys-240–Cys-249, Cys-256–Cys-267, Cys-261–Cys-276, Cys-278–Cys-287, Cys-294–Cys-305, Cys-299–Cys-314, Cys-316–Cys-325, Cys-332–Cys-343, Cys-337–Cys-352, Cys-354–Cys-363, Cys-370–Cys-381, Cys-375–Cys-390, Cys-392–Cys-401, Cys-408–Cys-419, Cys-413–Cys-428, Cys-430–Cys-439, Cys-446–Cys-457, Cys-451–Cys-466, Cys-468–Cys-477, Cys-484–Cys-495, Cys-489–Cys-504, Cys-506–Cys-515, Cys-522–Cys-533, Cys-527–Cys-542, Cys-544–Cys-553, Cys-560–Cys-571, Cys-565–Cys-580, Cys-582–Cys-591, Cys-598–Cys-609, Cys-603–Cys-618, Cys-620–Cys-629, Cys-636–Cys-647, Cys-641–Cys-656, Cys-658–Cys-667, Cys-674–Cys-685, Cys-679–Cys-694, Cys-696–Cys-705, Cys-712–Cys-723, Cys-717–Cys-732, Cys-734–Cys-743, Cys-750–Cys-761, Cys-755–Cys-770, Cys-772–Cys-781, Cys-788–Cys-799, Cys-793–Cys-808, Cys-810–Cys-819, Cys-826–Cys-837, Cys-831–Cys-846, Cys-848–Cys-857, Cys-864–Cys-875, Cys-869–Cys-884, Cys-886–Cys-895, Cys-902–Cys-913, Cys-907–Cys-922, Cys-924–Cys-933, and Cys-939–Cys-1015. The EGF-like 3; calcium-binding domain occupies 214–250; the sequence is DIDECASDPCQNGGACVDGVNGYVCNCVPGFDGDECE. The region spanning 252-288 is the EGF-like 4; calcium-binding domain; that stretch reads NINECASSPCLNGGICVDGVNMFECTCLAGFTGVRCE. The EGF-like 5; calcium-binding domain maps to 290 to 326; sequence NIDECASAPCQNGGICIDGINGYTCSCPLGFSGDNCE. The EGF-like 6; calcium-binding domain occupies 328 to 364; that stretch reads NDDECSSIPCLNGGTCVDLVNAYMCVCAPGWTGPTCA. The region spanning 366–402 is the EGF-like 7; calcium-binding domain; it reads NIDECASAPCQNGGVCIDGVNGYMCDCQPGYTGTHCE. One can recognise an EGF-like 8; calcium-binding domain in the interval 404 to 440; it reads DIDECARPPCQNGGDCVDGVNGYVCICAPGFDGLNCE. The region spanning 442–478 is the EGF-like 9; calcium-binding domain; it reads NIDECASRPCQNGAVCVDGVNGFVCTCSAGYTGVLCE. An EGF-like 10; calcium-binding domain is found at 480–516; sequence DINECASMPCLNGGVCTDLVNGYICTCAAGFEGTNCE. The region spanning 518–554 is the EGF-like 11; calcium-binding domain; that stretch reads DTDECASFPCQNGATCTDQVNGYVCTCVPGYTGVLCE. Positions 556–592 constitute an EGF-like 12; calcium-binding domain; that stretch reads DINECASFPCLNGGTCNDQVNGYVCVCAQDTSVSTCE. Residues 594 to 630 form the EGF-like 13; calcium-binding domain; it reads DRDECASAPCLNGGACMDVVNGFVCTCLPGWEGTNCE. The 37-residue stretch at 632–668 folds into the EGF-like 14; calcium-binding domain; sequence NTDECASSPCMNGGLCVDQVNSYVCFCLPGFTGIHCG. The EGF-like 15; calcium-binding domain maps to 670-706; it reads EIDECASSPCLNGGQCIDRVDSYECVCAAGYTAVRCQ. The region spanning 708–744 is the EGF-like 16; calcium-binding domain; sequence NIDECASAPCQNGGVCVDGVNGYVCNCAPGYTGDNCE. The EGF-like 17; calcium-binding domain occupies 746–782; it reads EIDECASMPCLNGGACIEMVNGYTCQCVAGYTGVICE. An EGF-like 18; calcium-binding domain is found at 784–820; sequence DIDECASAPCQNGGVCTDTINGYICACVPGFTGSNCE. Residues 822–858 form the EGF-like 19; calcium-binding domain; sequence NIDECASDPCLNGGICVDGVNGFVCQCPPNYSGTYCE. Asn-851 carries an N-linked (GlcNAc...) asparagine glycan. Residues 860 to 896 enclose the EGF-like 20 domain; it reads SLDACRSMPCQNGATCVNVGADYVCECVPGYAGQNCE. The region spanning 898 to 934 is the EGF-like 21; calcium-binding domain; that stretch reads DINECASLPCQNGGLCIDGIAGYTCQCRLGYIGVNCE. The Avidin-like domain maps to 937–1056; sequence GFCDLEGMWY…GQDKWTRYEQ (120 aa).

Homotetramer.

The protein resides in the secreted. The protein localises to the extracellular space. It localises to the cytoplasmic vesicle. Its subcellular location is the extracellular matrix. It is found in the hyaline layer. The protein resides in the apical lamina. Forms the apical lamina, a component of the extracellular matrix. This is Fibropellin-1 (EGF1) from Strongylocentrotus purpuratus (Purple sea urchin).